Here is a 559-residue protein sequence, read N- to C-terminus: Formate--tetrahydrofolate ligase (559 aa).

68-75 (TPAGEGKT) provides a ligand contact to ATP.

This sequence belongs to the formate--tetrahydrofolate ligase family.

The catalysed reaction is (6S)-5,6,7,8-tetrahydrofolate + formate + ATP = (6R)-10-formyltetrahydrofolate + ADP + phosphate. Its pathway is one-carbon metabolism; tetrahydrofolate interconversion. The polypeptide is Formate--tetrahydrofolate ligase (Mesorhizobium japonicum (strain LMG 29417 / CECT 9101 / MAFF 303099) (Mesorhizobium loti (strain MAFF 303099))).